The primary structure comprises 734 residues: Photosystem I P700 chlorophyll a apoprotein A2 (734 aa).

8 consecutive transmembrane segments (helical) span residues Ile46–Ala69, Leu135–Gln158, Leu175–Ile199, Met273–Tyr291, Leu330–Tyr353, Ala369–Ile395, Ala417–His439, and Phe517–Val535. Residues Cys559 and Cys568 each contribute to the [4Fe-4S] cluster site. 2 consecutive transmembrane segments (helical) span residues Ala575 to Trp596 and Leu643 to Ile665. Chlorophyll a-binding residues include His654, Met662, and Tyr670. Trp671 serves as a coordination point for phylloquinone. A helical membrane pass occupies residues Leu707–Ala727.

This sequence belongs to the PsaA/PsaB family. In terms of assembly, the PsaA/B heterodimer binds the P700 chlorophyll special pair and subsequent electron acceptors. PSI consists of a core antenna complex that captures photons, and an electron transfer chain that converts photonic excitation into a charge separation. The eukaryotic PSI reaction center is composed of at least 11 subunits. Requires P700 is a chlorophyll a/chlorophyll a' dimer, A0 is one or more chlorophyll a, A1 is one or both phylloquinones and FX is a shared 4Fe-4S iron-sulfur center. as cofactor.

Its subcellular location is the plastid. The protein localises to the chloroplast thylakoid membrane. It carries out the reaction reduced [plastocyanin] + hnu + oxidized [2Fe-2S]-[ferredoxin] = oxidized [plastocyanin] + reduced [2Fe-2S]-[ferredoxin]. Functionally, psaA and PsaB bind P700, the primary electron donor of photosystem I (PSI), as well as the electron acceptors A0, A1 and FX. PSI is a plastocyanin-ferredoxin oxidoreductase, converting photonic excitation into a charge separation, which transfers an electron from the donor P700 chlorophyll pair to the spectroscopically characterized acceptors A0, A1, FX, FA and FB in turn. Oxidized P700 is reduced on the lumenal side of the thylakoid membrane by plastocyanin. This Spinacia oleracea (Spinach) protein is Photosystem I P700 chlorophyll a apoprotein A2.